Here is a 364-residue protein sequence, read N- to C-terminus: MLRKLNTPTTTLVRAASTRVEKLEEIRERLSKGPNFQDFIQNSDGVKEDWENYDGKLRREKGETQQLRLPPWLKTTIPMGKNYAKIKSQLRDLKLSTVCEEARCPNIGECWGGGEHSTQTATIMLMGDTCTRGCRFCSVKTARAPPPLDVNEPVNTAKAISSWGLDYIVLTSVDRDDLPDGGSKHIAETVREIKARNSNIFVECLVPDFRGDLECVKTIASCGLDVYAHNIETVEKLTPFVRDRRAHYRQTLQVLREAKNFNPNLITKSSIMLGLGETDAEVEQTMQDLREVGVECLTLGQYMQPTKRHLKVIEYVTPEKFKHWEQRGNELGFLYTASGPLVRSSYKAGEFFITSILANRRKSV.

[4Fe-4S] cluster contacts are provided by C99, C104, C110, C130, C134, C137, and S345. The region spanning 116–334 (HSTQTATIML…EQRGNELGFL (219 aa)) is the Radical SAM core domain.

This sequence belongs to the radical SAM superfamily. Lipoyl synthase family. It depends on [4Fe-4S] cluster as a cofactor.

It is found in the mitochondrion. It catalyses the reaction [[Fe-S] cluster scaffold protein carrying a second [4Fe-4S](2+) cluster] + N(6)-octanoyl-L-lysyl-[protein] + 2 oxidized [2Fe-2S]-[ferredoxin] + 2 S-adenosyl-L-methionine + 4 H(+) = [[Fe-S] cluster scaffold protein] + N(6)-[(R)-dihydrolipoyl]-L-lysyl-[protein] + 4 Fe(3+) + 2 hydrogen sulfide + 2 5'-deoxyadenosine + 2 L-methionine + 2 reduced [2Fe-2S]-[ferredoxin]. It functions in the pathway protein modification; protein lipoylation via endogenous pathway; protein N(6)-(lipoyl)lysine from octanoyl-[acyl-carrier-protein]: step 2/2. Catalyzes the radical-mediated insertion of two sulfur atoms into the C-6 and C-8 positions of the octanoyl moiety bound to the lipoyl domains of lipoate-dependent enzymes, thereby converting the octanoylated domains into lipoylated derivatives. The protein is Lipoyl synthase, mitochondrial of Drosophila mojavensis (Fruit fly).